The primary structure comprises 247 residues: uncharacterized protein (247 aa).

An N-terminal signal peptide occupies residues 1-35 (MWGPGVTAEGLSVAPAPPPLLPLLLLLALALVAPS). The helical transmembrane segment at 82–102 (LSGLLILLVLFAIGYFLQRII) threads the bilayer. The tract at residues 109-176 (YPRGQARPGQ…RGSGGRLPPS (68 aa)) is disordered. Positions 111–120 (RGQARPGQAR) are enriched in low complexity. The segment covering 161 to 171 (SGGGRGRGSGG) has biased composition (gly residues).

It is found in the membrane. This is an uncharacterized protein from Mus musculus (Mouse).